We begin with the raw amino-acid sequence, 397 residues long: Iron-sulfur cluster assembly SufBD family protein Rv1462 (397 aa).

T2 bears the N-acetylthreonine mark.

It belongs to the iron-sulfur cluster assembly SufBD family.

This chain is Iron-sulfur cluster assembly SufBD family protein Rv1462, found in Mycobacterium tuberculosis (strain ATCC 25618 / H37Rv).